Consider the following 49-residue polypeptide: Large ribosomal subunit protein bL33A (49 aa).

It belongs to the bacterial ribosomal protein bL33 family.

This is Large ribosomal subunit protein bL33A from Streptococcus pneumoniae (strain Hungary19A-6).